The following is a 343-amino-acid chain: Protein RecA (343 aa).

An ATP-binding site is contributed by 64-71 (GPESSGKT).

The protein belongs to the RecA family.

It localises to the cytoplasm. In terms of biological role, can catalyze the hydrolysis of ATP in the presence of single-stranded DNA, the ATP-dependent uptake of single-stranded DNA by duplex DNA, and the ATP-dependent hybridization of homologous single-stranded DNAs. It interacts with LexA causing its activation and leading to its autocatalytic cleavage. The sequence is that of Protein RecA from Bacillus thuringiensis (strain Al Hakam).